The chain runs to 388 residues: Leucine aminopeptidase 1 (388 aa).

The N-terminal stretch at 1–19 (MKLPALLILGVAASTMVLA) is a signal peptide. The propeptide occupies 20–88 (AIAPDQVPLN…LPKVFPTPAV (69 aa)). N-linked (GlcNAc...) asparagine glycosylation is found at Asn96, Asn119, Asn149, Asn164, and Asn181. Positions 189 and 207 each coordinate Zn(2+). An N-linked (GlcNAc...) asparagine glycan is attached at Asn232. Residues Glu246 and Asp273 each contribute to the Zn(2+) site. An intrachain disulfide couples Cys322 to Cys326. His355 contributes to the Zn(2+) binding site.

The protein belongs to the peptidase M28 family. M28E subfamily. As to quaternary structure, monomer. The cofactor is Zn(2+).

Its subcellular location is the secreted. Extracellular aminopeptidase that allows assimilation of proteinaceous substrates. The sequence is that of Leucine aminopeptidase 1 (LAP1) from Paracoccidioides brasiliensis (strain Pb03).